A 609-amino-acid polypeptide reads, in one-letter code: Forkhead box protein O (609 aa).

Disordered regions lie at residues 1–89 (MDGF…KNSS) and 181–263 (KSVR…SSCG). T43 is subject to Phosphothreonine; by PKB/AKT1. Positions 62–79 (TKASNQQLASGDPQQAMQ) are enriched in polar residues. Residues 80 to 89 (NANAAKKNSS) are compositionally biased toward low complexity. The fork-head DNA-binding region spans 94–200 (WGNLSYADLI…ETSRYEKRRG (107 aa)). At S189 the chain carries Phosphoserine; by PKB/AKT1. Composition is skewed to polar residues over residues 220–229 (ATPSPSSSVS) and 254–263 (RASSNASSCG). Phosphoserine; by PKB/AKT1 is present on S257. Residues S260, S261, and S266 each carry the phosphoserine modification. Disordered stretches follow at residues 321-365 (AASG…QGQG) and 384-411 (RDGL…DSLN). Residues 327–339 (TQPPPPYQPPQQP) show a composition bias toward pro residues. The span at 388–397 (SPNSVTTTMS) shows a compositional bias: polar residues.

As to quaternary structure, interacts with melt.

It is found in the cytoplasm. The protein resides in the nucleus. In terms of biological role, transcription factor involved in the regulation of the insulin signaling pathway. Consistently activates both the downstream target Thor\d4EBP and the feedback control target InR. Involved in negative regulation of the cell cycle, modulating cell growth and proliferation. In response to cellular stresses, such as nutrient deprivation or increased levels of reactive oxygen species, foxo is activated and inhibits growth through the action of target genes such as Thor. Foxo activated in the adult fat body can regulate lifespan in adults; an insulin peptide itself may function as one secondary messenger of insulin-regulated aging. Also regulates Lip4, homolog of human acid lipases, thereby acting as a key modulator of lipid metabolism by insulin signaling and integrates insulin responses to glucose and lipid homeostasis. This is Forkhead box protein O from Drosophila virilis (Fruit fly).